Reading from the N-terminus, the 395-residue chain is Forkhead box protein I3 (395 aa).

A DNA-binding region (fork-head) is located at residues 131-225 (RPPYSYSALI…DNGNFRRKRK (95 aa)). Disordered regions lie at residues 216 to 288 (DNGN…GIIS) and 322 to 370 (RNFS…SSGS). Positions 221-227 (RRKRKRR) match the Nuclear localization signal motif. A compositionally biased stretch (low complexity) spans 234–245 (ATTAAASSLGGL). Residues 325-335 (SAGQLSGGTFT) show a composition bias toward polar residues. Residues 336–349 (PSSSSSQEVPSPEQ) are compositionally biased toward low complexity.

In terms of tissue distribution, initially expressed in the pre-placodal ectoderm surrounding the neural plate, which will give rise to all craniofacial sensory organs. Expression then becomes restricted to a region immediately anterior to the first pair of somites that will give rise to the otic and epibranchial placodes, before becoming down-regulated from this region and restricted to the ectoderm and endoderm of the pharyngeal arches.

It localises to the nucleus. Functionally, transcription factor required for pharyngeal arch development, which is involved in otic placode development. The chain is Forkhead box protein I3 from Gallus gallus (Chicken).